We begin with the raw amino-acid sequence, 589 residues long: Probable methyltransferase PMT23 (589 aa).

Residues 1-4 are Cytoplasmic-facing; it reads MAIS. The helical; Signal-anchor for type II membrane protein transmembrane segment at 5–25 threads the bilayer; that stretch reads VQHVVVLLLSTLLIAITFFLF. At 26–589 the chain is on the lumenal side; it reads TSDNARFPFP…FWRPAKPELR (564 aa). Asn70, Asn375, and Asn442 each carry an N-linked (GlcNAc...) asparagine glycan.

Belongs to the methyltransferase superfamily.

The protein localises to the golgi apparatus membrane. In Arabidopsis thaliana (Mouse-ear cress), this protein is Probable methyltransferase PMT23.